Reading from the N-terminus, the 118-residue chain is Large ribosomal subunit protein bL20 (118 aa).

It belongs to the bacterial ribosomal protein bL20 family.

Its function is as follows. Binds directly to 23S ribosomal RNA and is necessary for the in vitro assembly process of the 50S ribosomal subunit. It is not involved in the protein synthesizing functions of that subunit. In Clostridioides difficile (strain 630) (Peptoclostridium difficile), this protein is Large ribosomal subunit protein bL20.